The primary structure comprises 193 residues: E3 ubiquitin-protein ligase RMA2 (193 aa).

An RING-type zinc finger spans residues 21-75 (CNICLDQVRDPVVTLCGHLFCWPCIHKWTYASNNSRQRVDQYDHKREPPKCPVCK). A helical; Anchor for type IV membrane protein transmembrane segment spans residues 175–192 (LSRVYLFLLCFMFMCLFL).

As to quaternary structure, interacts with ERABP1. Barely detected in roots and limited to the root tips. Expressed in leaf hydathodes and in siliques.

Its subcellular location is the endoplasmic reticulum membrane. The enzyme catalyses S-ubiquitinyl-[E2 ubiquitin-conjugating enzyme]-L-cysteine + [acceptor protein]-L-lysine = [E2 ubiquitin-conjugating enzyme]-L-cysteine + N(6)-ubiquitinyl-[acceptor protein]-L-lysine.. It participates in protein modification; protein ubiquitination. E3 ubiquitin-protein ligase that promotes the ubiquitination and proteasomal degradation of the auxin-binding protein ERABP1. The chain is E3 ubiquitin-protein ligase RMA2 (RMA2) from Arabidopsis thaliana (Mouse-ear cress).